The chain runs to 132 residues: Small ribosomal subunit protein uS11 (132 aa).

Belongs to the universal ribosomal protein uS11 family. In terms of assembly, part of the 30S ribosomal subunit. Interacts with proteins S7 and S18. Binds to IF-3.

Functionally, located on the platform of the 30S subunit, it bridges several disparate RNA helices of the 16S rRNA. Forms part of the Shine-Dalgarno cleft in the 70S ribosome. The protein is Small ribosomal subunit protein uS11 of Alkaliphilus metalliredigens (strain QYMF).